Reading from the N-terminus, the 192-residue chain is Elongation factor P (192 aa).

Positions 133–157 (EVTETTPGVKGDTAQGGDKPATLES) are disordered.

Belongs to the elongation factor P family.

The protein resides in the cytoplasm. Its pathway is protein biosynthesis; polypeptide chain elongation. Involved in peptide bond synthesis. Stimulates efficient translation and peptide-bond synthesis on native or reconstituted 70S ribosomes in vitro. Probably functions indirectly by altering the affinity of the ribosome for aminoacyl-tRNA, thus increasing their reactivity as acceptors for peptidyl transferase. The chain is Elongation factor P from Salinibacter ruber (strain DSM 13855 / M31).